The primary structure comprises 317 residues: tRNA dimethylallyltransferase (317 aa).

14-21 (GPTASGKS) contacts ATP. 16–21 (TASGKS) provides a ligand contact to substrate. 2 interaction with substrate tRNA regions span residues 39–42 (DSVL) and 163–167 (QRIQR).

It belongs to the IPP transferase family. Monomer. It depends on Mg(2+) as a cofactor.

The catalysed reaction is adenosine(37) in tRNA + dimethylallyl diphosphate = N(6)-dimethylallyladenosine(37) in tRNA + diphosphate. Catalyzes the transfer of a dimethylallyl group onto the adenine at position 37 in tRNAs that read codons beginning with uridine, leading to the formation of N6-(dimethylallyl)adenosine (i(6)A). This Xylella fastidiosa (strain 9a5c) protein is tRNA dimethylallyltransferase.